The sequence spans 1282 residues: Protein PIR (1282 aa).

As to quaternary structure, binds NAP1 and ROP2, but not ROP8. Expressed in roots, root hairs, hypocotyls, cotyledons, stems, leaves, trichomes and flowers.

In terms of biological role, involved in regulation of actin and microtubule organization. Part of a WAVE complex that activates the ARP2/3 complex. Interacts with the active form of RHO-family GTPases. The polypeptide is Protein PIR (PIR) (Arabidopsis thaliana (Mouse-ear cress)).